The sequence spans 224 residues: ATP synthase subunit a (224 aa).

Helical transmembrane passes span 17 to 37, 72 to 92, 99 to 119, 125 to 145, 155 to 175, and 184 to 204; these read LSLN…IYWL, IFIS…FPYI, LTLT…YGWI, MFAH…MVCI, GTLA…LTLL, and YLLV…ESAV.

Belongs to the ATPase A chain family. In terms of assembly, F-type ATPases have 2 components, CF(1) - the catalytic core - and CF(0) - the membrane proton channel. CF(1) has five subunits: alpha(3), beta(3), gamma(1), delta(1), epsilon(1). CF(0) has three main subunits: a, b and c.

It localises to the mitochondrion inner membrane. Mitochondrial membrane ATP synthase (F(1)F(0) ATP synthase or Complex V) produces ATP from ADP in the presence of a proton gradient across the membrane which is generated by electron transport complexes of the respiratory chain. F-type ATPases consist of two structural domains, F(1) - containing the extramembraneous catalytic core and F(0) - containing the membrane proton channel, linked together by a central stalk and a peripheral stalk. During catalysis, ATP synthesis in the catalytic domain of F(1) is coupled via a rotary mechanism of the central stalk subunits to proton translocation. Key component of the proton channel; it may play a direct role in the translocation of protons across the membrane. The polypeptide is ATP synthase subunit a (mt:ATPase6) (Drosophila yakuba (Fruit fly)).